Here is a 602-residue protein sequence, read N- to C-terminus: Aspartate--tRNA(Asp/Asn) ligase (602 aa).

E176 serves as a coordination point for L-aspartate. The interval 200–203 (QQFK) is aspartate. L-aspartate-binding residues include R222 and H452. 222–224 (RDE) provides a ligand contact to ATP. E490 is a binding site for ATP. R497 contributes to the L-aspartate binding site. 542 to 545 (GIDR) lines the ATP pocket.

This sequence belongs to the class-II aminoacyl-tRNA synthetase family. Type 1 subfamily. Homodimer.

Its subcellular location is the cytoplasm. The enzyme catalyses tRNA(Asx) + L-aspartate + ATP = L-aspartyl-tRNA(Asx) + AMP + diphosphate. Aspartyl-tRNA synthetase with relaxed tRNA specificity since it is able to aspartylate not only its cognate tRNA(Asp) but also tRNA(Asn). Reaction proceeds in two steps: L-aspartate is first activated by ATP to form Asp-AMP and then transferred to the acceptor end of tRNA(Asp/Asn). This Rickettsia canadensis (strain McKiel) protein is Aspartate--tRNA(Asp/Asn) ligase.